A 372-amino-acid polypeptide reads, in one-letter code: Histidinol-phosphate aminotransferase (372 aa).

Lys-229 is modified (N6-(pyridoxal phosphate)lysine).

Belongs to the class-II pyridoxal-phosphate-dependent aminotransferase family. Histidinol-phosphate aminotransferase subfamily. Homodimer. Pyridoxal 5'-phosphate serves as cofactor.

The catalysed reaction is L-histidinol phosphate + 2-oxoglutarate = 3-(imidazol-4-yl)-2-oxopropyl phosphate + L-glutamate. Its pathway is amino-acid biosynthesis; L-histidine biosynthesis; L-histidine from 5-phospho-alpha-D-ribose 1-diphosphate: step 7/9. In Bdellovibrio bacteriovorus (strain ATCC 15356 / DSM 50701 / NCIMB 9529 / HD100), this protein is Histidinol-phosphate aminotransferase.